The sequence spans 247 residues: TM2 domain-containing protein 3 (247 aa).

The signal sequence occupies residues 1 to 30 (MDLMMALKRVCRVLLFVTQMYVFSGRGSLS). Residues 31–179 (FEYSQPVAQP…RTFPKMLYCN (149 aa)) are Extracellular-facing. 6 N-linked (GlcNAc...) asparagine glycosylation sites follow: asparagine 87, asparagine 99, asparagine 139, asparagine 155, asparagine 169, and asparagine 179. The helical transmembrane segment at 180–200 (WTGGYKWSTALALSITLGGFG) threads the bilayer. Residues 183–231 (GYKWSTALALSITLGGFGADRFYLGQWREGLGKLFSFGGLGIWTLIDVF) enclose the TM2 domain. Residues 201 to 215 (ADRFYLGQWREGLGK) are Cytoplasmic-facing. The chain crosses the membrane as a helical span at residues 216-236 (LFSFGGLGIWTLIDVFLISVG). Residues 237–247 (YVGPADGSLYI) are Extracellular-facing.

It belongs to the TM2 family.

The protein localises to the membrane. In Xenopus laevis (African clawed frog), this protein is TM2 domain-containing protein 3 (tm2d3).